The following is a 264-amino-acid chain: Thymidylate synthase (264 aa).

Arginine 21 contacts dUMP. Histidine 51 contributes to the (6R)-5,10-methylene-5,6,7,8-tetrahydrofolate binding site. 126 to 127 contributes to the dUMP binding site; it reads RR. Residue cysteine 146 is the Nucleophile of the active site. Residues 166–169, asparagine 177, and 207–209 contribute to the dUMP site; these read RSCD and HLY. Aspartate 169 provides a ligand contact to (6R)-5,10-methylene-5,6,7,8-tetrahydrofolate. Alanine 263 provides a ligand contact to (6R)-5,10-methylene-5,6,7,8-tetrahydrofolate.

This sequence belongs to the thymidylate synthase family. Bacterial-type ThyA subfamily. Homodimer.

The protein localises to the cytoplasm. It carries out the reaction dUMP + (6R)-5,10-methylene-5,6,7,8-tetrahydrofolate = 7,8-dihydrofolate + dTMP. It participates in pyrimidine metabolism; dTTP biosynthesis. Catalyzes the reductive methylation of 2'-deoxyuridine-5'-monophosphate (dUMP) to 2'-deoxythymidine-5'-monophosphate (dTMP) while utilizing 5,10-methylenetetrahydrofolate (mTHF) as the methyl donor and reductant in the reaction, yielding dihydrofolate (DHF) as a by-product. This enzymatic reaction provides an intracellular de novo source of dTMP, an essential precursor for DNA biosynthesis. The protein is Thymidylate synthase of Escherichia coli (strain 55989 / EAEC).